We begin with the raw amino-acid sequence, 294 residues long: Cytidine deaminase (294 aa).

CMP/dCMP-type deaminase domains are found at residues 48–168 (DEDA…FGPK) and 186–294 (LTGD…VLLG). 89–91 (NME) provides a ligand contact to substrate. H102 lines the Zn(2+) pocket. E104 functions as the Proton donor in the catalytic mechanism. C129 and C132 together coordinate Zn(2+).

It belongs to the cytidine and deoxycytidylate deaminase family. As to quaternary structure, homodimer. The cofactor is Zn(2+).

It catalyses the reaction cytidine + H2O + H(+) = uridine + NH4(+). The catalysed reaction is 2'-deoxycytidine + H2O + H(+) = 2'-deoxyuridine + NH4(+). Functionally, this enzyme scavenges exogenous and endogenous cytidine and 2'-deoxycytidine for UMP synthesis. The polypeptide is Cytidine deaminase (Salmonella choleraesuis (strain SC-B67)).